Reading from the N-terminus, the 228-residue chain is Large ribosomal subunit protein bL25 (228 aa).

The interval 196–228 is disordered; it reads EEAAVAEAQSAESAEGKAEAEAEATNEKNKSEA. Residues 209–228 are compositionally biased toward basic and acidic residues; it reads AEGKAEAEAEATNEKNKSEA.

Belongs to the bacterial ribosomal protein bL25 family. CTC subfamily. Part of the 50S ribosomal subunit; part of the 5S rRNA/L5/L18/L25 subcomplex. Contacts the 5S rRNA. Binds to the 5S rRNA independently of L5 and L18.

This is one of the proteins that binds to the 5S RNA in the ribosome where it forms part of the central protuberance. This Methylorubrum extorquens (strain CM4 / NCIMB 13688) (Methylobacterium extorquens) protein is Large ribosomal subunit protein bL25.